Reading from the N-terminus, the 505-residue chain is Maturase K (505 aa).

This sequence belongs to the intron maturase 2 family. MatK subfamily.

The protein localises to the plastid. It localises to the chloroplast. Usually encoded in the trnK tRNA gene intron. Probably assists in splicing its own and other chloroplast group II introns. The chain is Maturase K from Nuphar variegata (Yellow pond lily).